The sequence spans 259 residues: Insulin-like growth factor-binding protein 1 (259 aa).

The first 25 residues, 1–25 (MSEVPVARVWLVLLLLTVQVGVTAG), serve as a signal peptide directing secretion. The IGFBP N-terminal domain occupies 26 to 107 (APWQCAPCSA…TRGQGACVQE (82 aa)). Intrachain disulfides connect Cys30-Cys57, Cys33-Cys59, Cys41-Cys60, Cys48-Cys63, Cys71-Cys84, and Cys78-Cys104. Ser45 is modified (phosphoserine; by FAM20C). Phosphoserine is present on residues Ser120, Ser123, Ser126, and Ser144. Ser156 is modified (phosphoserine; by FAM20C). A Phosphothreonine; by FAM20C modification is found at Thr157. Tyr158 is subject to Phosphotyrosine. Residues 173–251 (KEPCRIELYR…SPEIRGDPNC (79 aa)) form the Thyroglobulin type-1 domain. Disulfide bonds link Cys176/Cys206, Cys217/Cys228, and Cys230/Cys251. Thr193 bears the Phosphothreonine; by FAM20C mark. Residues Ser194 and Ser199 each carry the phosphoserine; by FAM20C modification. Phosphoserine; by FAM20C is present on Ser242. The short motif at 246–248 (RGD) is the Cell attachment site element.

In terms of assembly, binds equally well IGF1 and IGF2. Interacts with integrin ITGA5:ITGB1. Interacts with VHL; this interaction inhibits HIF1A degradation. Post-translationally, phosphorylated; probably by casein kinase II. Phosphorylation alters the affinity of the protein for IGFs. In amniotic fluid, the unmodified protein is the most abundant form, while mono-, bi-, tri- and tetraphosphorylated forms are present in decreasing amounts. The phosphorylation state may influence the propensity to proteolysis.

It is found in the secreted. In terms of biological role, multifunctional protein that plays a critical role in regulating the availability of IGFs such as IGF1 and IGF2 to their receptors and thereby regulates IGF-mediated cellular processes including cell migration, proliferation, differentiation or apoptosis in a cell-type specific manner. Also plays a positive role in cell migration by interacting with integrin ITGA5:ITGB1 through its RGD motif. Mechanistically, binding to integrins leads to activation of focal adhesion kinase/PTK2 and stimulation of the mitogen-activated protein kinase (MAPK) pathway. Regulates cardiomyocyte apoptosis by suppressing HIF-1alpha/HIF1A ubiquitination and subsequent degradation. This Homo sapiens (Human) protein is Insulin-like growth factor-binding protein 1 (IGFBP1).